The sequence spans 265 residues: Imidazole glycerol phosphate synthase subunit HisF (265 aa).

Catalysis depends on residues D17 and D136.

The protein belongs to the HisA/HisF family. Heterodimer of HisH and HisF.

It is found in the cytoplasm. It catalyses the reaction 5-[(5-phospho-1-deoxy-D-ribulos-1-ylimino)methylamino]-1-(5-phospho-beta-D-ribosyl)imidazole-4-carboxamide + L-glutamine = D-erythro-1-(imidazol-4-yl)glycerol 3-phosphate + 5-amino-1-(5-phospho-beta-D-ribosyl)imidazole-4-carboxamide + L-glutamate + H(+). It participates in amino-acid biosynthesis; L-histidine biosynthesis; L-histidine from 5-phospho-alpha-D-ribose 1-diphosphate: step 5/9. IGPS catalyzes the conversion of PRFAR and glutamine to IGP, AICAR and glutamate. The HisF subunit catalyzes the cyclization activity that produces IGP and AICAR from PRFAR using the ammonia provided by the HisH subunit. The protein is Imidazole glycerol phosphate synthase subunit HisF of Mycobacterium avium (strain 104).